A 138-amino-acid polypeptide reads, in one-letter code: MSAAVLLSVLFALACGQAASFCIPTEYTMYVDRRECAYCLTINTTICAGYCMTRDINGKLFLPKYALSQDVCTYRDFIYRTVEIPGCPHHVTPYFSFPVAVSCKCGKCNTDNSDCIHEAVRTNYCTKPQSFYLGGFSV.

The first 20 residues, 1-20 (MSAAVLLSVLFALACGQAAS), serve as a signal peptide directing secretion. 6 cysteine pairs are disulfide-bonded: Cys-22/Cys-72, Cys-36/Cys-87, Cys-39/Cys-125, Cys-47/Cys-103, Cys-51/Cys-105, and Cys-108/Cys-115. Residue Asn-43 is glycosylated (N-linked (GlcNAc...) asparagine). The propeptide occupies 133-138 (LGGFSV).

The protein belongs to the glycoprotein hormones subunit beta family. Heterodimer of a common alpha chain and a unique beta chain which confers biological specificity to thyrotropin, lutropin, follitropin and gonadotropin.

The protein localises to the secreted. Functionally, indispensable for the control of thyroid structure and metabolism. The polypeptide is Thyrotropin subunit beta (Tshb) (Mus musculus (Mouse)).